The sequence spans 417 residues: Putative F-box protein At4g21240 (417 aa).

The segment covering 1-12 has biased composition (acidic residues); that stretch reads MDRREEEEEETG. Residues 1-25 form a disordered region; the sequence is MDRREEEEEETGYGEKGTRNQSKED. The span at 16-25 shows a compositional bias: basic and acidic residues; sequence KGTRNQSKED. The F-box domain maps to 30–76; sequence GKIFELIPLDMIPDILLRLPAKSAVRFRIVSKLWLSITTRPYFIRSF.

This chain is Putative F-box protein At4g21240, found in Arabidopsis thaliana (Mouse-ear cress).